A 294-amino-acid polypeptide reads, in one-letter code: Diaminopimelate epimerase (294 aa).

3 residues coordinate substrate: Asn-13, Gln-46, and Asn-69. The active-site Proton donor is Cys-78. Substrate-binding positions include 79–80 (GN), Asn-173, Asn-206, and 224–225 (ER). Cys-233 acts as the Proton acceptor in catalysis. 234–235 (GT) is a substrate binding site.

Belongs to the diaminopimelate epimerase family. As to quaternary structure, homodimer.

It localises to the cytoplasm. It carries out the reaction (2S,6S)-2,6-diaminopimelate = meso-2,6-diaminopimelate. It participates in amino-acid biosynthesis; L-lysine biosynthesis via DAP pathway; DL-2,6-diaminopimelate from LL-2,6-diaminopimelate: step 1/1. Its function is as follows. Catalyzes the stereoinversion of LL-2,6-diaminopimelate (L,L-DAP) to meso-diaminopimelate (meso-DAP), a precursor of L-lysine and an essential component of the bacterial peptidoglycan. This Variovorax paradoxus (strain S110) protein is Diaminopimelate epimerase.